Consider the following 301-residue polypeptide: UDP-N-acetylenolpyruvoylglucosamine reductase (301 aa).

The FAD-binding PCMH-type domain occupies 24–190; sequence RVGGLAQFYD…VSAQLQLQPG (167 aa). Residue Arg169 is part of the active site. The active-site Proton donor is Ser220. Glu290 is an active-site residue.

It belongs to the MurB family. It depends on FAD as a cofactor.

The protein resides in the cytoplasm. The catalysed reaction is UDP-N-acetyl-alpha-D-muramate + NADP(+) = UDP-N-acetyl-3-O-(1-carboxyvinyl)-alpha-D-glucosamine + NADPH + H(+). Its pathway is cell wall biogenesis; peptidoglycan biosynthesis. Cell wall formation. This Synechococcus sp. (strain ATCC 27144 / PCC 6301 / SAUG 1402/1) (Anacystis nidulans) protein is UDP-N-acetylenolpyruvoylglucosamine reductase.